The following is a 158-amino-acid chain: 3-hydroxyacyl-[acyl-carrier-protein] dehydratase FabZ (158 aa).

Residue histidine 57 is part of the active site.

The protein belongs to the thioester dehydratase family. FabZ subfamily.

Its subcellular location is the cytoplasm. It carries out the reaction a (3R)-hydroxyacyl-[ACP] = a (2E)-enoyl-[ACP] + H2O. Functionally, involved in unsaturated fatty acids biosynthesis. Catalyzes the dehydration of short chain beta-hydroxyacyl-ACPs and long chain saturated and unsaturated beta-hydroxyacyl-ACPs. This Helicobacter acinonychis (strain Sheeba) protein is 3-hydroxyacyl-[acyl-carrier-protein] dehydratase FabZ.